The primary structure comprises 459 residues: Transmembrane protein 143 (459 aa).

2 helical membrane-spanning segments follow: residues leucine 280–valine 300 and leucine 301–leucine 321. The residue at position 332 (serine 332) is a Phosphoserine. Residues glycine 435 to serine 459 form a disordered region. A compositionally biased stretch (polar residues) spans glutamate 448–serine 459.

It is found in the membrane. This Homo sapiens (Human) protein is Transmembrane protein 143 (TMEM143).